Here is a 122-residue protein sequence, read N- to C-terminus: MGYGVCHFYLLFIINGAPQGLVTPSRGLRQGDPLSPYLFILCTEVLSGLCRRAQEQGRLPGIRVSNNSPRINHLLFADDTSSARWIPLAAQIWPIFFLSMRLFQGNPVNHPMSNLYFLGSLP.

Its subcellular location is the mitochondrion. This is an uncharacterized protein from Arabidopsis thaliana (Mouse-ear cress).